The chain runs to 504 residues: MEEFQVYLELNRSRRHDFLYPLIFREYIYALAHEHGLNKSMIFFENQGYGNKFSSPIVKRLILRMDQQNRLISSANDSNQNPVFGHNNNLYSQMIAAGFAVIVEIPFSLRLISYSQGAEAAKSHNFQSIHSIFPFLEDKFSHLNYVLEALIPHPIHLEILVQALRYWVKDACSLHLLRFSLYEYCNLKSFITPKKSISIFNPRLFLFLYNSHTCEYESIFLFLRNQSSHLRSTSSGVFLERIFFYGKIKYLGEVFYNDFQNNLWLFKDPFIHFIRYQGKSILASKDTSLLINKWKYYFVDLWQYYFYLWSQSGRVRINQLSKYSLDFLGYLSSVRLNPSVVRSQMLENSFLIDNAVKTLDTRIPIISLIGSLSKAKFCNTLGHPISKPTWADSPDSDIIDRFVRISRNLSHYHSGSSKKKSLYRIKYILRFSCVKTLARKHKSTVRAFLKKLGSEFLEEFFTETEEEHVFSLIFPRGFFALRKVYRGRIWYLDIICINALVNHS.

This sequence belongs to the intron maturase 2 family. MatK subfamily.

The protein localises to the plastid. It is found in the chloroplast. Functionally, usually encoded in the trnK tRNA gene intron. Probably assists in splicing its own and other chloroplast group II introns. This chain is Maturase K, found in Gossypium turneri (Cotton).